Here is a 353-residue protein sequence, read N- to C-terminus: MTIALGKSSKEEQTLFDIMDDWLRRDRFVFVGWSGLLLFPCAYFALGGWFTGTTFVTSWYTHGLASSYLEGCNFLTAAVSTPANSLAHSLLLLWGPEAQGDFTRWCQLGGLWAFVALHGAFGLIGFMLRQFELARSVQLRPYNAIAFSAPIAVFVSVFLIYPLGQSGWFFAPSFGVAAIFRFILFFQGFHNWTLNPFHMMGVAGVLGAALLCAIHGATVENTLFEDGDGANTFRAFNPTQAEETYSMVTANRFWSQIFGVAFSNKRWLHFFMLFVPVTGLWMSAIGVVGLALNLRAYDFVSQEIRAAEDPEFETFYTKNILLNEGIRAWMAAQDQPHENLIFPEEVLPRGNAL.

At threonine 2 the chain carries N-acetylthreonine. The residue at position 2 (threonine 2) is a Phosphothreonine. The chain crosses the membrane as a helical span at residues 41-61; the sequence is CAYFALGGWFTGTTFVTSWYT. Histidine 118 serves as a coordination point for chlorophyll a. The chain crosses the membrane as a helical span at residues 125 to 141; it reads GFMLRQFELARSVQLRP. Positions 130 and 143 each coordinate pheophytin a. The helical transmembrane segment at 153–166 threads the bilayer; the sequence is VFVSVFLIYPLGQS. Histidine 198 provides a ligand contact to chlorophyll a. A helical membrane pass occupies residues 208–228; it reads AALLCAIHGATVENTLFEDGD. A plastoquinone contacts are provided by histidine 215 and phenylalanine 262. A Fe cation-binding site is contributed by histidine 215. Histidine 269 contacts Fe cation. The chain crosses the membrane as a helical span at residues 279–295; the sequence is GLWMSAIGVVGLALNLR.

The protein belongs to the reaction center PufL/M/PsbA/D family. In terms of assembly, PSII is composed of 1 copy each of membrane proteins PsbA, PsbB, PsbC, PsbD, PsbE, PsbF, PsbH, PsbI, PsbJ, PsbK, PsbL, PsbM, PsbT, PsbX, PsbY, PsbZ, Psb30/Ycf12, at least 3 peripheral proteins of the oxygen-evolving complex and a large number of cofactors. It forms dimeric complexes. The D1/D2 heterodimer binds P680, chlorophylls that are the primary electron donor of PSII, and subsequent electron acceptors. It shares a non-heme iron and each subunit binds pheophytin, quinone, additional chlorophylls, carotenoids and lipids. There is also a Cl(-1) ion associated with D1 and D2, which is required for oxygen evolution. The PSII complex binds additional chlorophylls, carotenoids and specific lipids. is required as a cofactor.

It is found in the plastid. Its subcellular location is the chloroplast thylakoid membrane. The enzyme catalyses 2 a plastoquinone + 4 hnu + 2 H2O = 2 a plastoquinol + O2. Its function is as follows. Photosystem II (PSII) is a light-driven water:plastoquinone oxidoreductase that uses light energy to abstract electrons from H(2)O, generating O(2) and a proton gradient subsequently used for ATP formation. It consists of a core antenna complex that captures photons, and an electron transfer chain that converts photonic excitation into a charge separation. The D1/D2 (PsbA/PsbD) reaction center heterodimer binds P680, the primary electron donor of PSII as well as several subsequent electron acceptors. D2 is needed for assembly of a stable PSII complex. In Cryptomeria japonica (Japanese cedar), this protein is Photosystem II D2 protein.